The primary structure comprises 333 residues: Uroporphyrinogen decarboxylase (333 aa).

Residues 21–25, Asp-70, Tyr-139, Ser-194, and His-309 contribute to the substrate site; that span reads RQVGR.

Belongs to the uroporphyrinogen decarboxylase family. In terms of assembly, homodimer.

Its subcellular location is the cytoplasm. It catalyses the reaction uroporphyrinogen III + 4 H(+) = coproporphyrinogen III + 4 CO2. It participates in porphyrin-containing compound metabolism; protoporphyrin-IX biosynthesis; coproporphyrinogen-III from 5-aminolevulinate: step 4/4. Catalyzes the decarboxylation of four acetate groups of uroporphyrinogen-III to yield coproporphyrinogen-III. This is Uroporphyrinogen decarboxylase from Chlamydia abortus (strain DSM 27085 / S26/3) (Chlamydophila abortus).